We begin with the raw amino-acid sequence, 420 residues long: ATP phosphoribosyltransferase regulatory subunit (420 aa).

The protein belongs to the class-II aminoacyl-tRNA synthetase family. HisZ subfamily. As to quaternary structure, heteromultimer composed of HisG and HisZ subunits.

It localises to the cytoplasm. Its pathway is amino-acid biosynthesis; L-histidine biosynthesis; L-histidine from 5-phospho-alpha-D-ribose 1-diphosphate: step 1/9. Required for the first step of histidine biosynthesis. May allow the feedback regulation of ATP phosphoribosyltransferase activity by histidine. The chain is ATP phosphoribosyltransferase regulatory subunit from Bacillus anthracis (strain A0248).